Reading from the N-terminus, the 325-residue chain is MSETATWQPSAPIPNLLKRAAVMAEIRRFFTDRGVLEVETPCMSQATVTDIHLFPFETRFVGPGHSQGLNLYLMTSPEYHMKRLLAAGCGPVFQLCRSFRNEEMGRHHNPEFTMLEWYRPCYDMYRLINEVDDLLQQVLECQPAESLSYQQAFQRHLEIDPLSADKAQLREVAAKLDLSNIADTEEDRDTLLQLLFTMGVEPHIGKDRPTFIYHFPATQASLAQISPEDHRVAERFEVYYKGIELANGFHELTDAHEQRLRFEQDNRKRAARGLPQQPIDNNLLAALEAGLPDCSGVALGVDRVVMLALGAESIGEVIAFTVDRA.

76 to 78 (SPE) serves as a coordination point for substrate. Residues 100–102 (RNE) and Asn109 each bind ATP. Tyr118 contacts substrate. Position 244-245 (244-245 (EL)) interacts with ATP. Glu251 serves as a coordination point for substrate. An ATP-binding site is contributed by Gly300.

It belongs to the class-II aminoacyl-tRNA synthetase family. EpmA subfamily. As to quaternary structure, homodimer.

The catalysed reaction is D-beta-lysine + L-lysyl-[protein] + ATP = N(6)-((3R)-3,6-diaminohexanoyl)-L-lysyl-[protein] + AMP + diphosphate + H(+). In terms of biological role, with EpmB is involved in the beta-lysylation step of the post-translational modification of translation elongation factor P (EF-P). Catalyzes the ATP-dependent activation of (R)-beta-lysine produced by EpmB, forming a lysyl-adenylate, from which the beta-lysyl moiety is then transferred to the epsilon-amino group of a conserved specific lysine residue in EF-P. The sequence is that of Elongation factor P--(R)-beta-lysine ligase from Klebsiella pneumoniae subsp. pneumoniae (strain ATCC 700721 / MGH 78578).